The chain runs to 310 residues: MGDVLEQFFILTGLLVCLACLAKCVRFSRCVLLNYWKVLPKSFLRSMGQWAVITGAGDGIGKAYSFELAKRGLNVVLISRTLEKLEAIATEIERTTGRSVKIIQADFTKDDIYEHIKEKLAGLEIGILVNNVGMLPNLLPSHFLNAPDEIQSLIHCNITSVVKMTQLILKHMESRQKGLILNISSGIALFPWPLYSMYSASKAFVCAFSKALQEEYKAKEVIIQVLTPYAVSTAMTKYLNTNVITKTADEFVKESLNYVTIGGETCGCLAHEILAGFLSLIPAWAFYSGAFQRLLLTHYVAYLKLNTKVR.

Residue 48-77 coordinates NADP(+); that stretch reads GQWAVITGAGDGIGKAYSFELAKRGLNVVL. Position 185 (S185) interacts with substrate. Y198 serves as the catalytic Proton acceptor.

This sequence belongs to the short-chain dehydrogenases/reductases (SDR) family. 17-beta-HSD 3 subfamily. In terms of tissue distribution, testis.

It is found in the endoplasmic reticulum. The enzyme catalyses a 17beta-hydroxy steroid + NADP(+) = a 17-oxo steroid + NADPH + H(+). The catalysed reaction is testosterone + NADP(+) = androst-4-ene-3,17-dione + NADPH + H(+). It catalyses the reaction 17beta-estradiol + NADP(+) = estrone + NADPH + H(+). It carries out the reaction 3beta-hydroxyandrost-5-en-17-one + NADPH + H(+) = androst-5-en-3beta,17beta-diol + NADP(+). The enzyme catalyses 17beta-hydroxy-5alpha-androstan-3-one + NADP(+) = 5alpha-androstan-3,17-dione + NADPH + H(+). The catalysed reaction is androsterone + NADPH + H(+) = 5alpha-androstane-3alpha,17beta-diol + NADP(+). It catalyses the reaction 3beta-hydroxy-5alpha-androstan-17-one + NADPH + H(+) = 5alpha-androstane-3beta,17beta-diol + NADP(+). It carries out the reaction androst-4-ene-3,11,17-trione + NADPH + H(+) = 17beta-hydroxyandrost-4-ene-3,11-dione + NADP(+). The enzyme catalyses 11beta-hydroxyandrost-4-ene-3,17-dione + NADPH + H(+) = 11beta,17beta-dihydroxyandrost-4-ene-3-one + NADP(+). Its pathway is hormone biosynthesis; testosterone biosynthesis. It functions in the pathway steroid metabolism. Its function is as follows. Catalyzes the conversion of 17-oxosteroids to 17beta-hydroxysteroids. Favors the reduction of androstenedione to testosterone. Testosterone is the key androgen driving male development and function. Uses NADPH while the two other EDH17B enzymes use NADH. Androgens such as epiandrosterone, dehydroepiandrosterone, androsterone and androstanedione are accepted as substrates and reduced at C-17. Can reduce 11-ketoandrostenedione as well as 11beta-hydroxyandrostenedione at C-17 to the respective testosterone forms. In Homo sapiens (Human), this protein is 17-beta-hydroxysteroid dehydrogenase type 3.